The following is a 656-amino-acid chain: Chaperone protein HtpG (656 aa).

Residues 1-359 (MSAQVEQLEF…AEDMSLNVSR (359 aa)) are a; substrate-binding. The b stretch occupies residues 360-575 (EILQQNRQIN…AFGITPALAR (216 aa)). Residues 576–656 (IYRASGQDVP…LLADLLSRSM (81 aa)) are c.

It belongs to the heat shock protein 90 family. As to quaternary structure, homodimer.

Its subcellular location is the cytoplasm. Functionally, molecular chaperone. Has ATPase activity. In Mycobacterium leprae (strain TN), this protein is Chaperone protein HtpG.